Here is a 390-residue protein sequence, read N- to C-terminus: 1-deoxy-D-xylulose 5-phosphate reductoisomerase (390 aa).

Residues T10, G11, S12, I13, G36, R37, N38, and N121 each contribute to the NADPH site. Residue K122 participates in 1-deoxy-D-xylulose 5-phosphate binding. E123 contributes to the NADPH binding site. D147 contributes to the Mn(2+) binding site. Residues S148, E149, S173, and H196 each coordinate 1-deoxy-D-xylulose 5-phosphate. E149 lines the Mn(2+) pocket. G202 serves as a coordination point for NADPH. 1-deoxy-D-xylulose 5-phosphate is bound by residues S209, N214, K215, and E218. E218 is a Mn(2+) binding site. Residues A367–R390 are disordered. Residues E370–V380 show a composition bias toward basic and acidic residues.

This sequence belongs to the DXR family. Mg(2+) is required as a cofactor. It depends on Mn(2+) as a cofactor.

The catalysed reaction is 2-C-methyl-D-erythritol 4-phosphate + NADP(+) = 1-deoxy-D-xylulose 5-phosphate + NADPH + H(+). Its pathway is isoprenoid biosynthesis; isopentenyl diphosphate biosynthesis via DXP pathway; isopentenyl diphosphate from 1-deoxy-D-xylulose 5-phosphate: step 1/6. Catalyzes the NADPH-dependent rearrangement and reduction of 1-deoxy-D-xylulose-5-phosphate (DXP) to 2-C-methyl-D-erythritol 4-phosphate (MEP). In Anaeromyxobacter sp. (strain K), this protein is 1-deoxy-D-xylulose 5-phosphate reductoisomerase.